The following is a 449-amino-acid chain: UDP-N-acetylmuramoyl-tripeptide--D-alanyl-D-alanine ligase (449 aa).

An ATP-binding site is contributed by 106–112 (GSVGKTS).

The protein belongs to the MurCDEF family. MurF subfamily.

The protein localises to the cytoplasm. It catalyses the reaction D-alanyl-D-alanine + UDP-N-acetyl-alpha-D-muramoyl-L-alanyl-gamma-D-glutamyl-meso-2,6-diaminopimelate + ATP = UDP-N-acetyl-alpha-D-muramoyl-L-alanyl-gamma-D-glutamyl-meso-2,6-diaminopimeloyl-D-alanyl-D-alanine + ADP + phosphate + H(+). Its pathway is cell wall biogenesis; peptidoglycan biosynthesis. Functionally, involved in cell wall formation. Catalyzes the final step in the synthesis of UDP-N-acetylmuramoyl-pentapeptide, the precursor of murein. This chain is UDP-N-acetylmuramoyl-tripeptide--D-alanyl-D-alanine ligase, found in Rickettsia prowazekii (strain Madrid E).